A 196-amino-acid chain; its full sequence is Probable malonic semialdehyde reductase RutE (196 aa).

It belongs to the nitroreductase family. HadB/RutE subfamily. The cofactor is FMN.

The enzyme catalyses 3-hydroxypropanoate + NADP(+) = 3-oxopropanoate + NADPH + H(+). Functionally, may reduce toxic product malonic semialdehyde to 3-hydroxypropionic acid, which is excreted. This chain is Probable malonic semialdehyde reductase RutE, found in Enterobacter sp. (strain 638).